The chain runs to 96 residues: RNA-binding protein Hfq (96 aa).

A Sm domain is found at 9 to 68; it reads DPYLNALRRERIPVSIYLVNGIKLQGQIESFDQFVILLKNTVNQMVYKHAISTVVPARSV.

The protein belongs to the Hfq family. Homohexamer.

Functionally, RNA chaperone that binds small regulatory RNA (sRNAs) and mRNAs to facilitate mRNA translational regulation in response to envelope stress, environmental stress and changes in metabolite concentrations. Also binds with high specificity to tRNAs. The protein is RNA-binding protein Hfq of Histophilus somni (strain 129Pt) (Haemophilus somnus).